Consider the following 165-residue polypeptide: ATP synthase subunit b (165 aa).

Residues 10-30 (LIFWMLLSFGIVFAVLAKYGF) form a helical membrane-spanning segment.

It belongs to the ATPase B chain family. F-type ATPases have 2 components, F(1) - the catalytic core - and F(0) - the membrane proton channel. F(1) has five subunits: alpha(3), beta(3), gamma(1), delta(1), epsilon(1). F(0) has three main subunits: a(1), b(2) and c(10-14). The alpha and beta chains form an alternating ring which encloses part of the gamma chain. F(1) is attached to F(0) by a central stalk formed by the gamma and epsilon chains, while a peripheral stalk is formed by the delta and b chains.

Its subcellular location is the cell inner membrane. Its function is as follows. F(1)F(0) ATP synthase produces ATP from ADP in the presence of a proton or sodium gradient. F-type ATPases consist of two structural domains, F(1) containing the extramembraneous catalytic core and F(0) containing the membrane proton channel, linked together by a central stalk and a peripheral stalk. During catalysis, ATP synthesis in the catalytic domain of F(1) is coupled via a rotary mechanism of the central stalk subunits to proton translocation. Functionally, component of the F(0) channel, it forms part of the peripheral stalk, linking F(1) to F(0). The protein is ATP synthase subunit b of Bacteroides fragilis (strain ATCC 25285 / DSM 2151 / CCUG 4856 / JCM 11019 / LMG 10263 / NCTC 9343 / Onslow / VPI 2553 / EN-2).